Consider the following 382-residue polypeptide: N-acetylglucosamine-6-phosphate deacetylase (382 aa).

Glutamate 131 lines the a divalent metal cation pocket. Substrate is bound at residue 142-143; the sequence is TH. Residues histidine 195 and histidine 216 each coordinate a divalent metal cation. Substrate is bound by residues 219-220, arginine 227, and 248-251; these read NA and DGLH. Aspartate 273 functions as the Proton donor/acceptor in the catalytic mechanism. 306–308 lines the substrate pocket; it reads LSG.

Belongs to the metallo-dependent hydrolases superfamily. NagA family. As to quaternary structure, homotetramer. It depends on a divalent metal cation as a cofactor.

The catalysed reaction is N-acetyl-D-glucosamine 6-phosphate + H2O = D-glucosamine 6-phosphate + acetate. It participates in amino-sugar metabolism; N-acetylneuraminate degradation; D-fructose 6-phosphate from N-acetylneuraminate: step 4/5. In terms of biological role, involved in the first committed step in the biosynthesis of amino-sugar-nucleotides. Catalyzes the hydrolysis of the N-acetyl group of N-acetylglucosamine-6-phosphate (GlcNAc-6-P) to yield glucosamine 6-phosphate and acetate. Can probably also catalyze the deacetylation of N-acetyl-D-galactosamine 6-phosphate to D-galactosamine 6-phosphate. This is N-acetylglucosamine-6-phosphate deacetylase (nagA) from Escherichia coli O157:H7.